Reading from the N-terminus, the 160-residue chain is Cytochrome b6-f complex subunit 4 (160 aa).

Helical transmembrane passes span 36–56, 95–115, and 131–151; these read LLYIFPVVILGTIACIVGLAV, LLGIALQTLVPLGLMLVPFIE, and TVFLFGTVTTIYLGIGAALPI.

This sequence belongs to the cytochrome b family. PetD subfamily. As to quaternary structure, the 4 large subunits of the cytochrome b6-f complex are cytochrome b6, subunit IV (17 kDa polypeptide, PetD), cytochrome f and the Rieske protein, while the 4 small subunits are PetG, PetL, PetM and PetN. The complex functions as a dimer.

The protein resides in the cellular thylakoid membrane. Functionally, component of the cytochrome b6-f complex, which mediates electron transfer between photosystem II (PSII) and photosystem I (PSI), cyclic electron flow around PSI, and state transitions. This is Cytochrome b6-f complex subunit 4 from Parasynechococcus marenigrum (strain WH8102).